The primary structure comprises 161 residues: DNA-directed RNA polymerase 18 kDa subunit (161 aa).

This sequence belongs to the poxviridae DNA-directed RNA polymerase 18 kDa subunit family. As to quaternary structure, the DNA-dependent RNA polymerase used for intermediate and late genes expression consists of eight subunits Rpo30/OPG66, Rpo7/OPG90, Rpo22/OPG103, Rpo147/OPG105, Rpo18/OPG119, Rpo19/OPG131, Rpo132/OPG151 and Rpo35/OPG156. The same holoenzyme, with the addition of the transcription-specificity factor OPG109, is used for early gene expression. Post-translationally, apparently non-glycosylated.

It is found in the virion. The enzyme catalyses RNA(n) + a ribonucleoside 5'-triphosphate = RNA(n+1) + diphosphate. Part of the DNA-dependent RNA polymerase which catalyzes the transcription of viral DNA into RNA using the four ribonucleoside triphosphates as substrates. Responsible for the transcription of early, intermediate and late genes. DNA-dependent RNA polymerase associates with the early transcription factor (ETF), itself composed of OPG118 and OPG133, thereby allowing the early genes transcription. Late transcription, and probably also intermediate transcription, require newly synthesized RNA polymerase. The polypeptide is DNA-directed RNA polymerase 18 kDa subunit (OPG119) (Cynomys gunnisoni (Gunnison's prairie dog)).